The chain runs to 436 residues: 3-ketoacyl-CoA thiolase (436 aa).

The active-site Acyl-thioester intermediate is C99. Catalysis depends on proton acceptor residues H392 and C422.

This sequence belongs to the thiolase-like superfamily. Thiolase family. As to quaternary structure, heterotetramer of two alpha chains (FadJ) and two beta chains (FadI).

The protein resides in the cytoplasm. It carries out the reaction an acyl-CoA + acetyl-CoA = a 3-oxoacyl-CoA + CoA. It functions in the pathway lipid metabolism; fatty acid beta-oxidation. Catalyzes the final step of fatty acid oxidation in which acetyl-CoA is released and the CoA ester of a fatty acid two carbons shorter is formed. The polypeptide is 3-ketoacyl-CoA thiolase (Shewanella sediminis (strain HAW-EB3)).